We begin with the raw amino-acid sequence, 619 residues long: Dihydroxy-acid dehydratase (619 aa).

Mg(2+) is bound at residue aspartate 81. Cysteine 122 is a [2Fe-2S] cluster binding site. Mg(2+) is bound by residues aspartate 123 and lysine 124. The residue at position 124 (lysine 124) is an N6-carboxylysine. Residue cysteine 198 coordinates [2Fe-2S] cluster. Position 494 (glutamate 494) interacts with Mg(2+). Catalysis depends on serine 520, which acts as the Proton acceptor.

This sequence belongs to the IlvD/Edd family. As to quaternary structure, homodimer. [2Fe-2S] cluster serves as cofactor. Mg(2+) is required as a cofactor.

It carries out the reaction (2R)-2,3-dihydroxy-3-methylbutanoate = 3-methyl-2-oxobutanoate + H2O. The catalysed reaction is (2R,3R)-2,3-dihydroxy-3-methylpentanoate = (S)-3-methyl-2-oxopentanoate + H2O. Its pathway is amino-acid biosynthesis; L-isoleucine biosynthesis; L-isoleucine from 2-oxobutanoate: step 3/4. It participates in amino-acid biosynthesis; L-valine biosynthesis; L-valine from pyruvate: step 3/4. In terms of biological role, functions in the biosynthesis of branched-chain amino acids. Catalyzes the dehydration of (2R,3R)-2,3-dihydroxy-3-methylpentanoate (2,3-dihydroxy-3-methylvalerate) into 2-oxo-3-methylpentanoate (2-oxo-3-methylvalerate) and of (2R)-2,3-dihydroxy-3-methylbutanoate (2,3-dihydroxyisovalerate) into 2-oxo-3-methylbutanoate (2-oxoisovalerate), the penultimate precursor to L-isoleucine and L-valine, respectively. This is Dihydroxy-acid dehydratase from Neisseria meningitidis serogroup A / serotype 4A (strain DSM 15465 / Z2491).